A 324-amino-acid chain; its full sequence is uncharacterized protein (324 aa).

This is an uncharacterized protein from Borreliella burgdorferi (strain ATCC 35210 / DSM 4680 / CIP 102532 / B31) (Borrelia burgdorferi).